We begin with the raw amino-acid sequence, 534 residues long: Serine/threonine-protein phosphatase 2B catalytic subunit (534 aa).

3 residues coordinate Fe cation: Asp-88, His-90, and Asp-116. Zn(2+) is bound by residues Asp-116 and Asn-148. His-149 serves as the catalytic Proton donor. Residues His-197 and His-279 each coordinate Zn(2+). Disordered regions lie at residues 375-398 (LEDETPTSVSPSAPSPPLPMDVES) and 475-534 (PSHE…TREA). Composition is skewed to basic and acidic residues over residues 475–497 (PSHEEVIKRSEEERRAALERAQQ) and 524–534 (QRDAARETREA).

It belongs to the PPP phosphatase family. PP-2B subfamily. Composed of two components (A and B), the A component is the catalytic subunit and the B component confers calcium sensitivity. It depends on Fe(3+) as a cofactor. Zn(2+) is required as a cofactor.

The catalysed reaction is O-phospho-L-seryl-[protein] + H2O = L-seryl-[protein] + phosphate. The enzyme catalyses O-phospho-L-threonyl-[protein] + H2O = L-threonyl-[protein] + phosphate. Functionally, calcium-dependent, calmodulin-stimulated protein phosphatase. This subunit may have a role in the calmodulin activation of calcineurin. The chain is Serine/threonine-protein phosphatase 2B catalytic subunit (cnaA) from Aspergillus fumigatus (strain ATCC MYA-4609 / CBS 101355 / FGSC A1100 / Af293) (Neosartorya fumigata).